Consider the following 96-residue polypeptide: ATP synthase subunit c (96 aa).

The next 2 membrane-spanning stretches (helical) occupy residues 9 to 29 (FIAC…GCGI) and 58 to 78 (IGLA…LILI).

This sequence belongs to the ATPase C chain family. As to quaternary structure, F-type ATPases have 2 components, F(1) - the catalytic core - and F(0) - the membrane proton channel. F(1) has five subunits: alpha(3), beta(3), gamma(1), delta(1), epsilon(1). F(0) has three main subunits: a(1), b(2) and c(10-14). The alpha and beta chains form an alternating ring which encloses part of the gamma chain. F(1) is attached to F(0) by a central stalk formed by the gamma and epsilon chains, while a peripheral stalk is formed by the delta and b chains.

The protein resides in the cell inner membrane. Functionally, f(1)F(0) ATP synthase produces ATP from ADP in the presence of a proton or sodium gradient. F-type ATPases consist of two structural domains, F(1) containing the extramembraneous catalytic core and F(0) containing the membrane proton channel, linked together by a central stalk and a peripheral stalk. During catalysis, ATP synthesis in the catalytic domain of F(1) is coupled via a rotary mechanism of the central stalk subunits to proton translocation. Key component of the F(0) channel; it plays a direct role in translocation across the membrane. A homomeric c-ring of between 10-14 subunits forms the central stalk rotor element with the F(1) delta and epsilon subunits. This is ATP synthase subunit c from Desulfosudis oleivorans (strain DSM 6200 / JCM 39069 / Hxd3) (Desulfococcus oleovorans).